The primary structure comprises 489 residues: Lysine--tRNA ligase (489 aa).

Mg(2+)-binding residues include glutamate 399 and glutamate 406.

This sequence belongs to the class-II aminoacyl-tRNA synthetase family. Homodimer. Requires Mg(2+) as cofactor.

The protein localises to the cytoplasm. The enzyme catalyses tRNA(Lys) + L-lysine + ATP = L-lysyl-tRNA(Lys) + AMP + diphosphate. This chain is Lysine--tRNA ligase, found in Synechococcus sp. (strain CC9311).